Reading from the N-terminus, the 107-residue chain is Large ribosomal subunit protein uL24 (107 aa).

It belongs to the universal ribosomal protein uL24 family. As to quaternary structure, part of the 50S ribosomal subunit.

One of two assembly initiator proteins, it binds directly to the 5'-end of the 23S rRNA, where it nucleates assembly of the 50S subunit. Functionally, one of the proteins that surrounds the polypeptide exit tunnel on the outside of the subunit. The polypeptide is Large ribosomal subunit protein uL24 (Pelotomaculum thermopropionicum (strain DSM 13744 / JCM 10971 / SI)).